Here is a 334-residue protein sequence, read N- to C-terminus: Dual specificity mitogen-activated protein kinase kinase 6 (334 aa).

The segment covering Met1–Pro11 has biased composition (basic residues). A disordered region spans residues Met1–Asp34. A d domain region spans residues Ser4 to Ala19. A Protein kinase domain is found at Leu53–Phe314. ATP-binding positions include Leu59 to Val67 and Lys82. The active-site Proton acceptor is Asp179. The residue at position 207 (Ser207) is a Phosphoserine; by MAPK3. Thr211 carries the post-translational modification Phosphothreonine; by MAPK3. The segment at His311–Asp334 is DVD domain.

This sequence belongs to the protein kinase superfamily. STE Ser/Thr protein kinase family. MAP kinase kinase subfamily. Dimer. Interacts (via its D domain) with its substrates MAPK11, MAPK12, MAPK13 and MAPK14. Interacts (via its DVD domain) with MAP3Ks activators like MAP3K5/ASK1, MAP3K1/MEKK1, MAP3K2/MEKK2, MAP3K3/MEKK3, MAP3K4/MEKK4, MAP3K7/TAK1, MAP3K11/MLK3 and MAP3K17/TAOK2. Interacts with DCTN1. Interacts with EIF2AK2/PKR. In terms of processing, weakly autophosphorylated. Phosphorylated at Ser-207 and Thr-211 by the majority of M3Ks, such as MAP3K5/ASK1, MAP3K1/MEKK1, MAP3K2/MEKK2, MAP3K3/MEKK3, MAP3K4/MEKK4, MAP3K7/TAK1, MAP3K11/MLK3 and MAP3K17/TAOK2. Post-translationally, in response to genotoxic stress, MAP3K-phosphorylated MAP2K6 is ubiquitinated and degraded by the SCF(FBXO31) complex.

It is found in the nucleus. Its subcellular location is the cytoplasm. It localises to the cytoskeleton. The enzyme catalyses L-seryl-[protein] + ATP = O-phospho-L-seryl-[protein] + ADP + H(+). The catalysed reaction is L-threonyl-[protein] + ATP = O-phospho-L-threonyl-[protein] + ADP + H(+). It carries out the reaction L-tyrosyl-[protein] + ATP = O-phospho-L-tyrosyl-[protein] + ADP + H(+). With respect to regulation, activated by dual phosphorylation on Ser-207 and Thr-211 in response to a variety of cellular stresses, including UV radiation, osmotic shock, hypoxia, inflammatory cytokines, interferon gamma (IFNG), and less often by growth factors. MAP2K6/MKK6 is activated by the majority of M3Ks, such as MAP3K5/ASK1, MAP3K1/MEKK1, MAP3K2/MEKK2, MAP3K3/MEKK3, MAP3K4/MEKK4, MAP3K7/TAK1, MAP3K11/MLK3 and MAP3K17/TAOK2. Dual specificity protein kinase which acts as an essential component of the MAP kinase signal transduction pathway. With MAP3K3/MKK3, catalyzes the concomitant phosphorylation of a threonine and a tyrosine residue in the MAP kinases p38 MAPK11, MAPK12, MAPK13 and MAPK14 and plays an important role in the regulation of cellular responses to cytokines and all kinds of stresses. Especially, MAP2K3/MKK3 and MAP2K6/MKK6 are both essential for the activation of MAPK11 and MAPK13 induced by environmental stress, whereas MAP2K6/MKK6 is the major MAPK11 activator in response to TNF. MAP2K6/MKK6 also phosphorylates and activates PAK6. The p38 MAP kinase signal transduction pathway leads to direct activation of transcription factors. Nuclear targets of p38 MAP kinase include the transcription factors ATF2 and ELK1. Within the p38 MAPK signal transduction pathway, MAP3K6/MKK6 mediates phosphorylation of STAT4 through MAPK14 activation, and is therefore required for STAT4 activation and STAT4-regulated gene expression in response to IL-12 stimulation. The pathway is also crucial for IL-6-induced SOCS3 expression and down-regulation of IL-6-mediated gene induction; and for IFNG-dependent gene transcription. Has a role in osteoclast differentiation through NF-kappa-B transactivation by TNFSF11, and in endochondral ossification and since SOX9 is another likely downstream target of the p38 MAPK pathway. MAP2K6/MKK6 mediates apoptotic cell death in thymocytes. Acts also as a regulator for melanocytes dendricity, through the modulation of Rho family GTPases. In Mus musculus (Mouse), this protein is Dual specificity mitogen-activated protein kinase kinase 6 (Map2k6).